Reading from the N-terminus, the 405-residue chain is Glucose-1-phosphate adenylyltransferase (405 aa).

Residues Gly-164, 179–180 (EK), and Ser-197 contribute to the alpha-D-glucose 1-phosphate site.

Belongs to the bacterial/plant glucose-1-phosphate adenylyltransferase family. In terms of assembly, homotetramer.

The enzyme catalyses alpha-D-glucose 1-phosphate + ATP + H(+) = ADP-alpha-D-glucose + diphosphate. It functions in the pathway glycan biosynthesis; glycogen biosynthesis. Involved in the biosynthesis of ADP-glucose, a building block required for the elongation reactions to produce glycogen. Catalyzes the reaction between ATP and alpha-D-glucose 1-phosphate (G1P) to produce pyrophosphate and ADP-Glc. The polypeptide is Glucose-1-phosphate adenylyltransferase (Corynebacterium jeikeium (strain K411)).